A 327-amino-acid chain; its full sequence is uncharacterized protein (327 aa).

The helical transmembrane segment at 12–32 (LVVVVVAIAIFTLVLLMLWEG) threads the bilayer. The disordered stretch occupies residues 149 to 170 (AFSAVETSEGSDQESEGADEQG). The span at 157–167 (EGSDQESEGAD) shows a compositional bias: acidic residues. Residues 162–227 (ESEGADEQGK…LDEENREVAE (66 aa)) adopt a coiled-coil conformation.

The protein localises to the membrane. This is an uncharacterized protein from Encephalitozoon cuniculi (strain GB-M1) (Microsporidian parasite).